A 557-amino-acid polypeptide reads, in one-letter code: MVLSDIEIANSVTMEPISKVANQLGIDEEALCLYGKYKAKIDARQLVALKDKPDGKLILVTAISPTPAGEGKTTTSVGLVDALSAIGKKAVIALREPSLGPVFGVKGGAAGGGHAQVVPMEDINLHFTGDFHAIGVANNLLAALIDNHIHHGNSLGIDSRRITWKRVVDMNDRQLRHIVDGLQGKVNGAPREDGYDITVASEIMAILCLSENISDLKARLEKIIIGYNYRGEPVTAKDLKAGGALAALLKDAIHPNLVQTLEHTPALIHGGPFANIAHGCNSVLATKLALKYGDYAVTEAGFGADLGAEKFIDIKCRMSGLRPAAVVLVATIRALKMHGGVPKADLATENVQAVVDGLPNLDKHLANIQDVYGLPVVVAINKFPLDTDAELQAVYDACDKRGVDVVISDVWANGGAGARELAEKVVTLAEQDNQFRFVYEEDDSIETKLTKIVTKVYGGKGITLSPAAKRELADLERLGFGNYPICMAKTQYSFSDDAKKLGAPTDFTVTISNLKVSAGAGFIVALTGAIMTMPGLPKVPASETIDIDEEGNITGLF.

Residue 66–73 (TPAGEGKT) coordinates ATP.

The protein belongs to the formate--tetrahydrofolate ligase family.

The enzyme catalyses (6S)-5,6,7,8-tetrahydrofolate + formate + ATP = (6R)-10-formyltetrahydrofolate + ADP + phosphate. It functions in the pathway one-carbon metabolism; tetrahydrofolate interconversion. This Streptococcus pyogenes serotype M3 (strain ATCC BAA-595 / MGAS315) protein is Formate--tetrahydrofolate ligase 2.